The chain runs to 235 residues: MMMDANEIISFIQNSKKKTPVKVYIKGDIADIDFGPSAKTFITGQTGVVFGEWADIEAALEANKHKIEDYVVENDRRNSAIPLLDLKHIKARIEPGAIIRDQVQIGDNAVIMMGAVINIGAVVGEGTMIDMNAVLGGRATVGKNCHVGAGAVLAGVIEPPSAKPVIVEDDVMIGANAVILEGVTVGKGAVVAAGAIVTEDVPPYTVVAGVPARVIKQIDEKTKAKVEIKQELRQL.

The protein belongs to the transferase hexapeptide repeat family. DapH subfamily.

The catalysed reaction is (S)-2,3,4,5-tetrahydrodipicolinate + acetyl-CoA + H2O = L-2-acetamido-6-oxoheptanedioate + CoA. The protein operates within amino-acid biosynthesis; L-lysine biosynthesis via DAP pathway; LL-2,6-diaminopimelate from (S)-tetrahydrodipicolinate (acetylase route): step 1/3. In terms of biological role, catalyzes the transfer of an acetyl group from acetyl-CoA to tetrahydrodipicolinate. In Anoxybacillus flavithermus (strain DSM 21510 / WK1), this protein is 2,3,4,5-tetrahydropyridine-2,6-dicarboxylate N-acetyltransferase.